The primary structure comprises 357 residues: Cobalt-precorrin-5B C(1)-methyltransferase (357 aa).

The protein belongs to the CbiD family.

The enzyme catalyses Co-precorrin-5B + S-adenosyl-L-methionine = Co-precorrin-6A + S-adenosyl-L-homocysteine. Its pathway is cofactor biosynthesis; adenosylcobalamin biosynthesis; cob(II)yrinate a,c-diamide from sirohydrochlorin (anaerobic route): step 6/10. Functionally, catalyzes the methylation of C-1 in cobalt-precorrin-5B to form cobalt-precorrin-6A. The chain is Cobalt-precorrin-5B C(1)-methyltransferase from Rhodospirillum rubrum (strain ATCC 11170 / ATH 1.1.1 / DSM 467 / LMG 4362 / NCIMB 8255 / S1).